A 213-amino-acid chain; its full sequence is MTTNKSYLTYFTDALWINNQPLIAILGICSALAVTTTVTTALTMGFAVSFVTGCSSFVVSLLRKITPESVRMIAQLIIISLFVILIDQFLKAFFFTISKTLSVFVGLIITNCIVMGRAESMARHVSPIPAFLDGLGSGLGYGWVLVCISIIRELFGFGTILGFRVIPEILYTSAAHPDGYENLGLMVLAPSAFFLLGIMIWIVNIIRAPKTKR.

Helical transmembrane passes span 22–42, 43–63, 77–97, 101–121, 131–151, and 183–203; these read LIAI…TTAL, TMGF…SLLR, IIIS…FFTI, LSVF…AESM, FLDG…ISII, and LGLM…IWIV.

It belongs to the NqrDE/RnfAE family. As to quaternary structure, composed of six subunits; NqrA, NqrB, NqrC, NqrD, NqrE and NqrF.

It is found in the cell inner membrane. It carries out the reaction a ubiquinone + n Na(+)(in) + NADH + H(+) = a ubiquinol + n Na(+)(out) + NAD(+). NQR complex catalyzes the reduction of ubiquinone-1 to ubiquinol by two successive reactions, coupled with the transport of Na(+) ions from the cytoplasm to the periplasm. NqrA to NqrE are probably involved in the second step, the conversion of ubisemiquinone to ubiquinol. The chain is Na(+)-translocating NADH-quinone reductase subunit D from Chlamydia trachomatis serovar A (strain ATCC VR-571B / DSM 19440 / HAR-13).